We begin with the raw amino-acid sequence, 617 residues long: DNA-(apurinic or apyrimidinic site) endonuclease (617 aa).

The segment at 74-99 (IKNSDEQNNSNNNNNNSSSSNFCSNN) is disordered. A compositionally biased stretch (low complexity) spans 81-99 (NNSNNNNNNSSSSNFCSNN). The Mg(2+) site is built by Asn-284 and Glu-317. The segment at 326 to 349 (SEPCDNKNKNKNKNDGIRDRGKIK) is disordered. The segment covering 329–349 (CDNKNKNKNKNDGIRDRGKIK) has biased composition (basic and acidic residues). Positions 474, 476, 606, and 607 each coordinate Mg(2+). The active-site Proton acceptor is the His-607.

This sequence belongs to the DNA repair enzymes AP/ExoA family. The cofactor is Mg(2+). Requires Mn(2+) as cofactor. In terms of processing, may be proteolytically cleaved into a 64 kDa form.

The protein localises to the mitochondrion. It catalyses the reaction Exonucleolytic cleavage in the 3'- to 5'-direction to yield nucleoside 5'-phosphates.. Apurinic/apyrimidinic (AP) endonuclease activity is maximal at low Mg(2+) (0.5-2 mM) with no activity seen at high concentrations (more than 10 mM). 3'-5' exonuclease activity is maximal in the range of 0.5-2 mM Mg(2+) with activity seen up to 10 mM Mg(2+). Functionally, multifunctional protein that plays a central role in mitochondrial DNA base excision repair (BER) pathway induced by oxidative stress. Has apurinic/apyrimidinic (AP) endonuclease activity towards double-stranded DNA (dsDNA). Has nucleotide incision repair (NIR) activity; acts on dsDNA with oxidized bases thymine glycol and 5,6-dihydro-2'-deoxyuridine. Has 3'-5' exonuclease; can use dsDNA templates with 3'-OH termini including blunt-end, gapped and mismatched 3'-recessed. Has 3'-phosphatase activity; cleaves 3'-phosphate from blunt, recessed and gapped dsDNA templates, followed by 3'-5' exonuclease activity. Has RNase H-like activity; cleaves RNA on 3'-recessed RNA-DNA duplex. Plays a role in merosome infection of host erythrocytes. The sequence is that of DNA-(apurinic or apyrimidinic site) endonuclease from Plasmodium falciparum (isolate 3D7).